Consider the following 217-residue polypeptide: Small ribosomal subunit protein uS3c (217 aa).

One can recognise a KH type-2 domain in the interval 47 to 118 (IQKHVKSVSN…NLRVTLTGVI (72 aa)).

The protein belongs to the universal ribosomal protein uS3 family. Part of the 30S ribosomal subunit.

The protein localises to the plastid. The protein resides in the chloroplast. This is Small ribosomal subunit protein uS3c (rps3) from Adiantum capillus-veneris (Maidenhair fern).